The chain runs to 136 residues: uncharacterized protein (136 aa).

This is an uncharacterized protein from Gallus gallus (Chicken).